The following is a 718-amino-acid chain: Phenylalanine--tRNA ligase beta subunit (718 aa).

In terms of domain architecture, tRNA-binding spans 39 to 153 (LNEISGIKFG…IFDLESNPLK (115 aa)). The B5 domain maps to 386-460 (SKKTFLDLNY…RFYGLEKLKD (75 aa)). The Mg(2+) site is built by Asp438, Asp444, and Asp448.

Belongs to the phenylalanyl-tRNA synthetase beta subunit family. Type 1 subfamily. Tetramer of two alpha and two beta subunits. Mg(2+) serves as cofactor.

The protein resides in the cytoplasm. It carries out the reaction tRNA(Phe) + L-phenylalanine + ATP = L-phenylalanyl-tRNA(Phe) + AMP + diphosphate + H(+). The protein is Phenylalanine--tRNA ligase beta subunit of Mesomycoplasma hyopneumoniae (strain 7448) (Mycoplasma hyopneumoniae).